The chain runs to 346 residues: Putative cytochrome bd menaquinol oxidase subunit II (346 aa).

9 helical membrane passes run 7 to 27 (ALIA…MATM), 63 to 83 (VFIV…TFVL), 87 to 107 (LLIP…FLVF), 119 to 139 (YISG…LPVT), 164 to 184 (AYSF…LLLA), 201 to 221 (KSAL…MVTM), 236 to 256 (FSWI…LFLP), 269 to 289 (LALV…GRAH), and 312 to 332 (ALFA…FFFW).

This sequence belongs to the cytochrome ubiquinol oxidase subunit 2 family.

The protein localises to the cell membrane. May have a role in sporulation. Can compensate for the loss of cytochrome aa3. The chain is Putative cytochrome bd menaquinol oxidase subunit II (ythB) from Bacillus subtilis (strain 168).